The chain runs to 622 residues: Deoxynucleoside triphosphate triphosphohydrolase SAMHD1 (622 aa).

The SAM domain occupies 26–89; it reads WDVEDTVAYL…LHCLQKLSQI (64 aa). GTP is bound by residues Lys-95 and Val-96. Asn-98 is a dGTP binding site. GTP is bound by residues Asp-116, Gln-121, and Arg-124. Gln-128, Leu-129, Val-135, and Arg-143 together coordinate dGTP. Gln-128 serves as a coordination point for dATP. Gln-128 lines the dCTP pocket. Gln-128 contributes to the dTTP binding site. Arg-143 is a binding site for dATP. A dCTP-binding site is contributed by Arg-143. Arg-143 contacts dTTP. The HD domain occupies 143–296; the sequence is RFEHSIGVGY…GIDVDKWDYF (154 aa). Residues His-146, His-185, and Asp-186 each contribute to the Mn(2+) site. The dATP site is built by His-189 and His-194. The dCTP site is built by His-189 and His-194. DTTP-binding residues include His-189 and His-194. Residue His-212 is part of the active site. Residue Asp-291 participates in Mn(2+) binding. DGTP-binding residues include Lys-292, Tyr-295, Asp-299, Arg-313, Arg-332, Lys-334, Asn-338, Arg-346, Tyr-354, Gln-355, His-356, and Lys-357. 3 residues coordinate dATP: Lys-292, Tyr-295, and Asp-299. Positions 292, 295, and 299 each coordinate dCTP. 3 residues coordinate dTTP: Lys-292, Tyr-295, and Asp-299. Arg-346 contributes to the dATP binding site. A dCTP-binding site is contributed by Arg-346. A dATP-binding site is contributed by Gln-355. Residue Gln-355 coordinates dCTP. Gln-355 lines the dTTP pocket. The GTP site is built by Arg-431, Lys-435, and Lys-502. Lys-502 serves as a coordination point for dGTP. A disordered region spans residues 571–622; sequence TPLKQDWHAREDEDEEEEEKHRQNQTLPHHTPQRTGRNVKVDLFQARGETKL. Polar residues predominate over residues 594 to 606; the sequence is NQTLPHHTPQRTG.

Belongs to the SAMHD1 family. In terms of assembly, homodimer; in absence of GTP and dNTP. Homotetramer; in GTP- and dNTP-bound form. Interacts with rbbp8/CtIP. It depends on Zn(2+) as a cofactor.

Its subcellular location is the nucleus. The protein resides in the chromosome. It carries out the reaction a 2'-deoxyribonucleoside 5'-triphosphate + H2O = a 2'-deoxyribonucleoside + triphosphate + H(+). It catalyses the reaction dATP + H2O = 2'-deoxyadenosine + triphosphate + H(+). The enzyme catalyses dCTP + H2O = 2'-deoxycytidine + triphosphate + H(+). The catalysed reaction is dGTP + H2O = 2'-deoxyguanosine + triphosphate + H(+). It carries out the reaction dTTP + H2O = thymidine + triphosphate + H(+). Allosterically activated and regulated via the combined actions of GTP and dNTPs (dATP, dGTP, dTTP and dCTP): Allosteric site 1 binds GTP, while allosteric site 2 binds dNTP. Allosteric activation promotes the formation of highly active homotetramers. In terms of biological role, protein that acts both as a host restriction factor involved in defense response to virus and as a regulator of DNA end resection at stalled replication forks. Has deoxynucleoside triphosphate (dNTPase) activity, which is required to restrict infection by viruses: dNTPase activity reduces cellular dNTP levels to levels too low for retroviral reverse transcription to occur, blocking early-stage virus replication in dendritic and other myeloid cells. Functions during S phase at stalled DNA replication forks to promote the resection of gapped or reversed forks: acts by stimulating the exonuclease activity of MRE11, activating the ATR-CHK1 pathway and allowing the forks to restart replication. Its ability to promote degradation of nascent DNA at stalled replication forks is required to prevent induction of type I interferons, thereby preventing chronic inflammation. Ability to promote DNA end resection at stalled replication forks is independent of dNTPase activity. This chain is Deoxynucleoside triphosphate triphosphohydrolase SAMHD1, found in Danio rerio (Zebrafish).